Here is a 341-residue protein sequence, read N- to C-terminus: N-acetyl-gamma-glutamyl-phosphate reductase (341 aa).

Cysteine 147 is a catalytic residue.

The protein belongs to the NAGSA dehydrogenase family. Type 1 subfamily.

The protein localises to the cytoplasm. It catalyses the reaction N-acetyl-L-glutamate 5-semialdehyde + phosphate + NADP(+) = N-acetyl-L-glutamyl 5-phosphate + NADPH + H(+). It functions in the pathway amino-acid biosynthesis; L-arginine biosynthesis; N(2)-acetyl-L-ornithine from L-glutamate: step 3/4. Catalyzes the NADPH-dependent reduction of N-acetyl-5-glutamyl phosphate to yield N-acetyl-L-glutamate 5-semialdehyde. This is N-acetyl-gamma-glutamyl-phosphate reductase from Dehalococcoides mccartyi (strain CBDB1).